The following is a 472-amino-acid chain: Methanethiol oxidase (472 aa).

Position 2 is an N-acetylalanine (Ala-2). 3 positions are modified to phosphoserine: Ser-111, Ser-371, and Ser-467.

The protein belongs to the selenium-binding protein family. Interacts with USP33. Phosphorylated. Post-translationally, the N-terminus is blocked. In terms of tissue distribution, widely expressed. Highly expressed in liver, lung, colon, prostate, kidney and pancreas. In brain, present both in neurons and glia (at protein level). Down-regulated in lung adenocarcinoma, colorectal carcinoma and ovarian cancer. Two-fold up-regulated in brain and blood from schizophrenia patients.

It is found in the nucleus. The protein resides in the cytoplasm. Its subcellular location is the cytosol. It localises to the membrane. It catalyses the reaction methanethiol + O2 + H2O = hydrogen sulfide + formaldehyde + H2O2 + H(+). Its pathway is organosulfur degradation. Its function is as follows. Catalyzes the oxidation of methanethiol, an organosulfur compound known to be produced in substantial amounts by gut bacteria. Selenium-binding protein which may be involved in the sensing of reactive xenobiotics in the cytoplasm. May be involved in intra-Golgi protein transport. The polypeptide is Methanethiol oxidase (SELENBP1) (Homo sapiens (Human)).